The following is a 337-amino-acid chain: MAQHETDAVIVGAGPVGLFAVFQCGMVKVRCHVVDALEAVGGQLSALYPEKPIYDIPGHPSILAADLVERLSEQAAPFAPTYHFGTQVSTLSRLDDGRWLCGLSNGDSIAARAVIICAGGGAFGPNRPPLDGLEQFEGTGVFYLVRKREDFRGKKVVIAGGGDSAVDWAISLSEVAAKVMVVHRRPKFRAAPESEARLKQLAETGAVELVVPYQLHGLEGENGTLSAVVVATLEGETKSLPADVLLPFYGLSSDLGPIAQWNLGMDRNLIAVDPATGATDAPGIYAAGDICTYPGKLKLILSGFAEAARVAHSAHDVVHPGEALHFEHSTTSGVPKG.

Residues Asp35, Gln43, Tyr48, Val88, Phe123, Asp289, and Thr330 each coordinate FAD.

The protein belongs to the ferredoxin--NADP reductase type 2 family. Homodimer. FAD is required as a cofactor.

The enzyme catalyses 2 reduced [2Fe-2S]-[ferredoxin] + NADP(+) + H(+) = 2 oxidized [2Fe-2S]-[ferredoxin] + NADPH. In Paramagnetospirillum magneticum (strain ATCC 700264 / AMB-1) (Magnetospirillum magneticum), this protein is Ferredoxin--NADP reductase.